A 314-amino-acid chain; its full sequence is Cathepsin L 2 (314 aa).

Residues 1–24 form the signal peptide; sequence MMLLGASLYLNNTQEVSDEIDTAN. Positions 25-109 are cleaved as a propeptide — activation peptide; it reads LYANWKMKYN…NASNANFQYK (85 aa). Intrachain disulfides connect cysteine 132-cysteine 175, cysteine 166-cysteine 207, and cysteine 259-cysteine 302. Residue cysteine 135 is part of the active site. Residues histidine 265 and asparagine 282 contribute to the active site.

This sequence belongs to the peptidase C1 family.

The protein resides in the secreted. It catalyses the reaction Specificity close to that of papain. As compared to cathepsin B, cathepsin L exhibits higher activity toward protein substrates, but has little activity on Z-Arg-Arg-NHMec, and no peptidyl-dipeptidase activity.. In terms of biological role, may be involved in extracellular digestion. The protein is Cathepsin L 2 of Paramecium tetraurelia.